Reading from the N-terminus, the 305-residue chain is Ornithine carbamoyltransferase (305 aa).

Carbamoyl phosphate contacts are provided by residues 52–55, Gln-79, Arg-103, and 130–133; these read STRT and HPLQ. Residues Asn-162, Asp-224, and 228–229 each bind L-ornithine; that span reads SM. Carbamoyl phosphate is bound by residues 264–265 and Arg-292; that span reads CL.

This sequence belongs to the aspartate/ornithine carbamoyltransferase superfamily. OTCase family.

The protein resides in the cytoplasm. It catalyses the reaction carbamoyl phosphate + L-ornithine = L-citrulline + phosphate + H(+). It participates in amino-acid biosynthesis; L-arginine biosynthesis; L-arginine from L-ornithine and carbamoyl phosphate: step 1/3. Its function is as follows. Reversibly catalyzes the transfer of the carbamoyl group from carbamoyl phosphate (CP) to the N(epsilon) atom of ornithine (ORN) to produce L-citrulline. This is Ornithine carbamoyltransferase from Pyrobaculum islandicum (strain DSM 4184 / JCM 9189 / GEO3).